Reading from the N-terminus, the 409-residue chain is Probable type I inositol 1,4,5-trisphosphate 5-phosphatase (409 aa).

It belongs to the inositol 1,4,5-trisphosphate 5-phosphatase type I family.

It carries out the reaction 1D-myo-inositol 1,4,5-trisphosphate + H2O = 1D-myo-inositol 1,4-bisphosphate + phosphate. It catalyses the reaction 1D-myo-inositol 1,3,4,5-tetrakisphosphate + H2O = 1D-myo-inositol 1,3,4-trisphosphate + phosphate. The sequence is that of Probable type I inositol 1,4,5-trisphosphate 5-phosphatase (ipp-5) from Caenorhabditis elegans.